The chain runs to 203 residues: Ribonuclease HII (203 aa).

The 187-residue stretch at 15–201 (LLVAGLDEAG…VAQAPLRFPE (187 aa)) folds into the RNase H type-2 domain. Positions 21, 22, and 111 each coordinate a divalent metal cation.

This sequence belongs to the RNase HII family. Mn(2+) serves as cofactor. It depends on Mg(2+) as a cofactor.

It is found in the cytoplasm. It catalyses the reaction Endonucleolytic cleavage to 5'-phosphomonoester.. Functionally, endonuclease that specifically degrades the RNA of RNA-DNA hybrids. This is Ribonuclease HII from Thermus thermophilus (strain ATCC BAA-163 / DSM 7039 / HB27).